Reading from the N-terminus, the 80-residue chain is Conotoxin MaIr193 (80 aa).

Positions 1–22 are cleaved as a signal peptide; the sequence is MKLTCMMIVAVLFLTAWTLVTA. The propeptide occupies 23-51; the sequence is DGTRDGLKNRFPKARLEMKNSEAPRSRGR. 3 disulfide bridges follow: C52/C69, C59/C73, and C68/C77. Position 64 is a 4-hydroxyproline (P64).

It belongs to the conotoxin O1 superfamily. Expressed by the venom duct.

It is found in the secreted. The sequence is that of Conotoxin MaIr193 from Conus marmoreus (Marble cone).